The following is a 45-amino-acid chain: Cytochrome b559 subunit beta (45 aa).

Residues 20-36 form a helical membrane-spanning segment; sequence WLALHTLGIPTVFFLGA. Position 24 (H24) interacts with heme.

The protein belongs to the PsbE/PsbF family. In terms of assembly, heterodimer of an alpha subunit and a beta subunit. PSII is composed of 1 copy each of membrane proteins PsbA, PsbB, PsbC, PsbD, PsbE, PsbF, PsbH, PsbI, PsbJ, PsbK, PsbL, PsbM, PsbT, PsbX, PsbY, PsbZ, Psb30/Ycf12, peripheral proteins PsbO, CyanoQ (PsbQ), PsbU, PsbV and a large number of cofactors. It forms dimeric complexes. Heme b is required as a cofactor.

Its subcellular location is the cellular thylakoid membrane. In terms of biological role, this b-type cytochrome is tightly associated with the reaction center of photosystem II (PSII). PSII is a light-driven water:plastoquinone oxidoreductase that uses light energy to abstract electrons from H(2)O, generating O(2) and a proton gradient subsequently used for ATP formation. It consists of a core antenna complex that captures photons, and an electron transfer chain that converts photonic excitation into a charge separation. In Synechococcus sp. (strain CC9902), this protein is Cytochrome b559 subunit beta.